Consider the following 62-residue polypeptide: Alpha-toxin Tf4 (62 aa).

The region spanning 2–62 (KEGYPADSKG…SVWDSATNKC (61 aa)) is the LCN-type CS-alpha/beta domain. 4 disulfide bridges follow: cysteine 12-cysteine 62, cysteine 16-cysteine 38, cysteine 24-cysteine 43, and cysteine 28-cysteine 45. Cysteine amide is present on cysteine 62.

As to expression, expressed by the venom gland.

It localises to the secreted. Its function is as follows. Alpha toxins bind voltage-independently at site-3 of sodium channels (Nav) and inhibit the inactivation of the activated channels, thereby blocking neuronal transmission. This toxin is toxic to frogs but non-toxic to insect larvae (T.molitor), mammals (rats) and crustaceans (crabs) at the doses assayed. The polypeptide is Alpha-toxin Tf4 (Tityus fasciolatus (Central Brazilian scorpion)).